Consider the following 563-residue polypeptide: MSEITLGKYLFERLKQVNVNTIFGLPGDFNLSLLDKIYEVDGLRWAGNANELNAAYAADGYARIKGLSVLVTTFGVGELSALNGIAGSYAEHVGVLHVVGVPSISAQAKQLLLHHTLGNGDFTVFHRMSANISETTSMITDIATAPSEIDRLIRTTFITQRPSYLGLPANLVDLKVPGSLLEKPIDLSLKPNDPEAEKEVIDTVLELIQNSKNPVILSDACASRHNVKKETQKLIDLTQFPAFVTPLGKGSIDEQHPRYGGVYVGTLSKQDVKQAVESADLILSVGALLSDFNTGSFSYSYKTKNVVEFHSDYVKVKNATFLGVQMKFALQNLLKVIPDVVKGYKSVPVPTKTPANKGVPASTPLKQEWLWNELSKFLQEGDVIISETGTSAFGINQTIFPKDAYGISQVLWGSIGFTTGATLGAAFAAEEIDPNKRVILFIGDGSLQLTVQEISTMIRWGLKPYLFVLNNDGYTIEKLIHGPHAEYNEIQTWDHLALLPAFGAKKYENHKIATTGEWDALTTDSEFQKNSVIRLIELKLPVFDAPESLIKQAQLTAATNAKQ.

The residue at position 2 (serine 2) is an N-acetylserine. Residues aspartate 28 and histidine 115 each coordinate pyruvate. Lysine 212 participates in a covalent cross-link: Glycyl lysine isopeptide (Lys-Gly) (interchain with G-Cter in ubiquitin). A Phosphoserine modification is found at serine 223. Lysine 233 participates in a covalent cross-link: Glycyl lysine isopeptide (Lys-Gly) (interchain with G-Cter in ubiquitin). Position 266 is a phosphothreonine (threonine 266). Residue lysine 269 forms a Glycyl lysine isopeptide (Lys-Gly) (interchain with G-Cter in ubiquitin) linkage. Position 353 is a phosphothreonine (threonine 353). Residues threonine 390 and glycine 413–isoleucine 415 contribute to the thiamine diphosphate site. Aspartate 444 contacts Mg(2+). Residues glycine 445–serine 446 and asparagine 471–isoleucine 476 each bind thiamine diphosphate. Mg(2+) contacts are provided by asparagine 471 and glycine 473. Glutamate 477 is a binding site for pyruvate. Lysine 505 participates in a covalent cross-link: Glycyl lysine isopeptide (Lys-Gly) (interchain with G-Cter in ubiquitin). Threonine 522 is modified (phosphothreonine).

This sequence belongs to the TPP enzyme family. As to quaternary structure, homotetramer. The cofactor is Mg(2+). Thiamine diphosphate serves as cofactor.

The protein localises to the cytoplasm. The enzyme catalyses pyruvate + H(+) = acetaldehyde + CO2. The catalysed reaction is 3-methyl-2-oxobutanoate + H(+) = 2-methylpropanal + CO2. It carries out the reaction (S)-3-methyl-2-oxopentanoate + H(+) = 2-methylbutanal + CO2. It catalyses the reaction indole-3-pyruvate + H(+) = indole-3-acetaldehyde + CO2. The enzyme catalyses 3-phenylpyruvate + H(+) = 2-phenylacetaldehyde + CO2. The catalysed reaction is 2-oxobutanoate + H(+) = propanal + CO2. It carries out the reaction 2-oxopentanoate + H(+) = butanal + CO2. It catalyses the reaction 2 acetaldehyde = acetoin. The enzyme catalyses acetaldehyde + pyruvate + H(+) = acetoin + CO2. It participates in fermentation; ethanol fermentation. The protein operates within amino-acid degradation; Ehrlich pathway. Its function is as follows. Minor of three pyruvate decarboxylases (PDC1, PDC5, PDC6) implicated in the nonoxidative conversion of pyruvate to acetaldehyde and carbon dioxide during alcoholic fermentation. Most of the produced acetaldehyde is subsequently reduced to ethanol, but some is required for cytosolic acetyl-CoA production for biosynthetic pathways. The enzyme is also one of five 2-oxo acid decarboxylases (PDC1, PDC5, PDC6, ARO10, and THI3) able to decarboxylate more complex 2-oxo acids (alpha-keto-acids) than pyruvate, which seem mainly involved in amino acid catabolism. Here the enzyme catalyzes the decarboxylation of amino acids, which, in a first step, have been transaminated to the corresponding 2-oxo acids. In a third step, the resulting aldehydes are reduced to alcohols, collectively referred to as fusel oils or alcohols. Its preferred substrates are the transaminated amino acids derived from threonine (2-oxobutanoate), norvaline (2-oxopentanoate), valine (3-methyl-2-oxobutanoate, also alpha-keto-isovalerate), isoleucine ((3S)-3-methyl-2-oxopentanoate, also alpha-keto-beta-methylvalerate), phenylalanine (phenylpyruvate), and tryptophan (3-(indol-3-yl)pyruvate), whereas transaminated leucine is no substrate. In a side-reaction the carbanionic intermediate (or active aldehyde) generated by decarboxylation or by activation of an aldehyde can react with an aldehyde via condensation (or carboligation) yielding a 2-hydroxy ketone, collectively called acyloins. The expression level of this protein in the presence of fermentable carbon sources is so low that it cannot compensate for the other two pyruvate decarboxylases to sustain fermentation. The sequence is that of Pyruvate decarboxylase isozyme 3 (PDC6) from Saccharomyces cerevisiae (strain ATCC 204508 / S288c) (Baker's yeast).